Here is a 964-residue protein sequence, read N- to C-terminus: Isoleucine--tRNA ligase (964 aa).

A 'HIGH' region motif is present at residues 66-76 (PYANGDIHIGH). Glu-596 serves as a coordination point for L-isoleucyl-5'-AMP. The short motif at 637-641 (KMSKS) is the 'KMSKS' region element. Residue Lys-640 coordinates ATP. Zn(2+)-binding residues include Cys-927, Cys-930, Cys-947, and Cys-950.

It belongs to the class-I aminoacyl-tRNA synthetase family. IleS type 1 subfamily. In terms of assembly, monomer. Zn(2+) is required as a cofactor.

It is found in the cytoplasm. It carries out the reaction tRNA(Ile) + L-isoleucine + ATP = L-isoleucyl-tRNA(Ile) + AMP + diphosphate. Its function is as follows. Catalyzes the attachment of isoleucine to tRNA(Ile). As IleRS can inadvertently accommodate and process structurally similar amino acids such as valine, to avoid such errors it has two additional distinct tRNA(Ile)-dependent editing activities. One activity is designated as 'pretransfer' editing and involves the hydrolysis of activated Val-AMP. The other activity is designated 'posttransfer' editing and involves deacylation of mischarged Val-tRNA(Ile). This chain is Isoleucine--tRNA ligase, found in Cupriavidus necator (strain ATCC 17699 / DSM 428 / KCTC 22496 / NCIMB 10442 / H16 / Stanier 337) (Ralstonia eutropha).